Here is a 367-residue protein sequence, read N- to C-terminus: Alanine racemase (367 aa).

Lys-35 serves as the catalytic Proton acceptor; specific for D-alanine. Lys-35 bears the N6-(pyridoxal phosphate)lysine mark. Arg-130 contacts substrate. Tyr-256 acts as the Proton acceptor; specific for L-alanine in catalysis. Met-304 contacts substrate.

Belongs to the alanine racemase family. It depends on pyridoxal 5'-phosphate as a cofactor.

It catalyses the reaction L-alanine = D-alanine. It participates in amino-acid biosynthesis; D-alanine biosynthesis; D-alanine from L-alanine: step 1/1. Its function is as follows. Catalyzes the interconversion of L-alanine and D-alanine. May also act on other amino acids. The protein is Alanine racemase (alr) of Methylibium petroleiphilum (strain ATCC BAA-1232 / LMG 22953 / PM1).